Here is a 515-residue protein sequence, read N- to C-terminus: Glycosyltransferase family 92 protein F59C6.8 (515 aa).

The helical transmembrane segment at 18-38 threads the bilayer; sequence LFIFIAVCLGFLIAVTILAGL. In terms of domain architecture, GT92 spans 163 to 456; that stretch reads RKVVACFSPL…IEVCYNRIFY (294 aa).

This sequence belongs to the glycosyltransferase 92 family.

It localises to the membrane. This Caenorhabditis elegans protein is Glycosyltransferase family 92 protein F59C6.8.